We begin with the raw amino-acid sequence, 447 residues long: UDP-N-acetylmuramoylalanine--D-glutamate ligase (447 aa).

112–118 is a binding site for ATP; sequence GTNGKST.

Belongs to the MurCDEF family.

The protein resides in the cytoplasm. The enzyme catalyses UDP-N-acetyl-alpha-D-muramoyl-L-alanine + D-glutamate + ATP = UDP-N-acetyl-alpha-D-muramoyl-L-alanyl-D-glutamate + ADP + phosphate + H(+). The protein operates within cell wall biogenesis; peptidoglycan biosynthesis. In terms of biological role, cell wall formation. Catalyzes the addition of glutamate to the nucleotide precursor UDP-N-acetylmuramoyl-L-alanine (UMA). This chain is UDP-N-acetylmuramoylalanine--D-glutamate ligase, found in Legionella pneumophila subsp. pneumophila (strain Philadelphia 1 / ATCC 33152 / DSM 7513).